A 65-amino-acid chain; its full sequence is MPKLKTRKAAAKRFRATGTGKIVRRKAFKNHLLEHKTTNKKRQFSKMAIVNERDEENVRLMLPYL.

Belongs to the bacterial ribosomal protein bL35 family.

This chain is Large ribosomal subunit protein bL35, found in Nostoc sp. (strain PCC 7120 / SAG 25.82 / UTEX 2576).